The primary structure comprises 1159 residues: WASH complex subunit 5 (1159 aa).

A Phosphoserine modification is found at serine 917.

This sequence belongs to the strumpellin family. As to quaternary structure, component of the WASH core complex also described as WASH regulatory complex (SHRC) composed of WASH (WASHC1, WASH2P or WASH3P), WASHC2 (WASHC2A or WASHC2C), WASHC3, WASHC4 and WASHC5. The WASH core complex associates via WASHC2 with the F-actin-capping protein dimer (formed by CAPZA1, CAPZA2 or CAPZA3 and CAPZB) in a transient or substoichiometric manner which was initially described as WASH complex. Interacts with VCP, PI4K2A.

Its subcellular location is the cytoplasm. The protein localises to the cytosol. It localises to the endoplasmic reticulum. The protein resides in the early endosome. In terms of biological role, acts as a component of the WASH core complex that functions as a nucleation-promoting factor (NPF) at the surface of endosomes, where it recruits and activates the Arp2/3 complex to induce actin polymerization, playing a key role in the fission of tubules that serve as transport intermediates during endosome sorting. May be involved in axonal outgrowth. Involved in cellular localization of ADRB2. Involved in cellular trafficking of BLOC-1 complex cargos such as ATP7A and VAMP7. This Pongo abelii (Sumatran orangutan) protein is WASH complex subunit 5.